Here is a 327-residue protein sequence, read N- to C-terminus: Short chain isoprenyl diphosphate synthase (327 aa).

Isopentenyl diphosphate-binding residues include Lys-48, Arg-51, and His-80. Mg(2+) is bound by residues Asp-87 and Asp-91. Arg-96 contacts an all-trans-polyprenyl diphosphate. Arg-97 is a binding site for isopentenyl diphosphate. An all-trans-polyprenyl diphosphate is bound by residues Lys-176, Thr-177, Gln-214, Lys-231, and Lys-241.

Belongs to the FPP/GGPP synthase family. In terms of assembly, homodimer. Mg(2+) is required as a cofactor.

The protein localises to the cytoplasm. This is Short chain isoprenyl diphosphate synthase (idsA) from Methanocaldococcus jannaschii (strain ATCC 43067 / DSM 2661 / JAL-1 / JCM 10045 / NBRC 100440) (Methanococcus jannaschii).